We begin with the raw amino-acid sequence, 66 residues long: Large ribosomal subunit protein uL29 (66 aa).

Belongs to the universal ribosomal protein uL29 family.

The sequence is that of Large ribosomal subunit protein uL29 from Rhizobium leguminosarum bv. trifolii (strain WSM2304).